Consider the following 697-residue polypeptide: Sodium-dependent phosphate transport protein 2B (697 aa).

Residues methionine 1–valine 45 form a disordered region. The Cytoplasmic segment spans residues methionine 1–threonine 91. Residues leucine 92–valine 112 traverse the membrane as a helical segment. Over cysteine 113–asparagine 136 the chain is Extracellular. The chain crosses the membrane as a helical span at residues asparagine 137–valine 157. Topologically, residues glutamine 158–alanine 213 are cytoplasmic. A helical transmembrane segment spans residues phenylalanine 214–leucine 234. Residues glutamate 235–alanine 363 lie on the Extracellular side of the membrane. N-linked (GlcNAc...) asparagine glycans are attached at residues asparagine 295, asparagine 308, asparagine 321, and asparagine 356. Cysteine 303 and cysteine 350 are joined by a disulfide. The helical transmembrane segment at valine 364–valine 384 threads the bilayer. The Cytoplasmic segment spans residues lysine 385–proline 408. Residues phenylalanine 409–isoleucine 429 form a helical membrane-spanning segment. The Extracellular portion of the chain corresponds to valine 430–glutamine 486. Residues isoleucine 487 to phenylalanine 507 traverse the membrane as a helical segment. Residues threonine 508–arginine 526 lie on the Cytoplasmic side of the membrane. The helical transmembrane segment at tryptophan 527 to leucine 547 threads the bilayer. Residues serine 548–glycine 551 are Extracellular-facing. A helical membrane pass occupies residues tryptophan 552–leucine 572. Residues arginine 573–valine 696 lie on the Cytoplasmic side of the membrane.

It belongs to the SLC34A transporter family. In terms of tissue distribution, highly abundant in the ileum of small intestine, whereas it is almost absent in the duodenum and in the jejunum.

The protein resides in the apical cell membrane. The catalysed reaction is 3 Na(+)(out) + phosphate(out) = 3 Na(+)(in) + phosphate(in). Its function is as follows. Involved in actively transporting phosphate into cells via Na(+) cotransport. The sequence is that of Sodium-dependent phosphate transport protein 2B (Slc34a2) from Mus musculus (Mouse).